Reading from the N-terminus, the 1087-residue chain is Platelet-derived growth factor receptor alpha (1087 aa).

An N-terminal signal peptide occupies residues 1–23 (MGTPPRTFLILGCFLTGPLLTLC). Over 24–528 (QLPLPTIVPN…PTLRSELTVA (505 aa)) the chain is Extracellular. 5 Ig-like C2-type domains span residues 26-104 (PLPT…YNHT), 116-208 (IYIY…IYIL), 213-312 (QLPV…VHDK), 314-411 (FIHL…SLLI), and 414-517 (PALI…LKLV). N-linked (GlcNAc...) asparagine glycosylation is found at Asn44, Asn75, Asn88, and Asn102. Cys49 and Cys99 form a disulfide bridge. Disulfide bonds link Cys149–Cys189 and Cys235–Cys290. Residues Asn353, Asn359, Asn458, and Asn468 are each glycosylated (N-linked (GlcNAc...) asparagine). Cysteines 435 and 501 form a disulfide. The chain crosses the membrane as a helical span at residues 529-549 (AAVLVLLVIVIISLIVLVIIW). Residues 550–1087 (KQKPRYEIRW…SSDLVEDSFL (538 aa)) lie on the Cytoplasmic side of the membrane. Phosphotyrosine; by autocatalysis is present on residues Tyr572 and Tyr574. Positions 593–954 (LVLGRILGSG…HLSEIVESLL (362 aa)) constitute a Protein kinase domain. Residues 599–607 (LGSGAFGKV) and Lys627 each bind ATP. 6 positions are modified to phosphotyrosine; by autocatalysis: Tyr720, Tyr731, Tyr742, Tyr754, Tyr762, and Tyr768. Asp818 serves as the catalytic Proton acceptor. Tyr849 and Tyr988 each carry phosphotyrosine; by autocatalysis. The span at 1000–1011 (KDRESGFDEQRL) shows a compositional bias: basic and acidic residues. Positions 1000–1059 (KDRESGFDEQRLSADSGYITPLPDIDPVSEDELGKRNRHSSQTSEESAIETGSSSSTFIK) are disordered. Residue Tyr1017 is modified to Phosphotyrosine; by autocatalysis. Residues 1039 to 1057 (SSQTSEESAIETGSSSSTF) are compositionally biased toward polar residues.

This sequence belongs to the protein kinase superfamily. Tyr protein kinase family. CSF-1/PDGF receptor subfamily. As to quaternary structure, interacts with homodimeric PDGFA, PDGFB and PDGFC, and with heterodimers formed by PDGFA and PDGFB. Monomer in the absence of bound ligand. Interaction with dimeric PDGFA, PDGFB and/or PDGFC leads to receptor dimerization, where both PDGFRA homodimers and heterodimers with PDGFRB are observed. Post-translationally, ubiquitinated, leading to its internalization and degradation. Autophosphorylated on tyrosine residues upon ligand binding. Autophosphorylation occurs in trans, i.e. one subunit of the dimeric receptor phosphorylates tyrosine residues on the other subunit.

The protein resides in the cell membrane. It localises to the cell projection. The protein localises to the cilium. Its subcellular location is the golgi apparatus. It catalyses the reaction L-tyrosyl-[protein] + ATP = O-phospho-L-tyrosyl-[protein] + ADP + H(+). Its activity is regulated as follows. Present in an inactive conformation in the absence of bound ligand. Binding of PDGFA and/or PDGFB leads to dimerization and activation by autophosphorylation on tyrosine residues. Functionally, tyrosine-protein kinase that acts as a cell-surface receptor for PDGFA, PDGFB and PDGFC and plays an essential role in the regulation of embryonic development, cell proliferation, survival and chemotaxis. Depending on the context, promotes or inhibits cell proliferation and cell migration. Plays an important role in the differentiation of bone marrow-derived mesenchymal stem cells. Required for normal skeleton development. Required for normal development of the gastrointestinal tract. Plays a role in cell migration and chemotaxis in wound healing. Plays a role in platelet activation, secretion of agonists from platelet granules, and in thrombin-induced platelet aggregation. Binding of its cognate ligands - homodimeric PDGFA, homodimeric PDGFB, heterodimers formed by PDGFA and PDGFB or homodimeric PDGFC -leads to the activation of several signaling cascades; the response depends on the nature of the bound ligand and is modulated by the formation of heterodimers between PDGFRA and PDGFRB. Phosphorylates PIK3R1, PLCG1, and PTPN11. Activation of PLCG1 leads to the production of the cellular signaling molecules diacylglycerol and inositol 1,4,5-trisphosphate, mobilization of cytosolic Ca(2+) and the activation of protein kinase C. Phosphorylates PIK3R1, the regulatory subunit of phosphatidylinositol 3-kinase, and thereby mediates activation of the AKT1 signaling pathway. Mediates activation of HRAS and of the MAP kinases MAPK1/ERK2 and/or MAPK3/ERK1. Promotes activation of STAT family members STAT1, STAT3 and STAT5A and/or STAT5B. Receptor signaling is down-regulated by protein phosphatases that dephosphorylate the receptor and its down-stream effectors, and by rapid internalization of the activated receptor. This Gallus gallus (Chicken) protein is Platelet-derived growth factor receptor alpha (PDGFRA).